A 528-amino-acid polypeptide reads, in one-letter code: Phosphoenolpyruvate carboxykinase (ATP) (528 aa).

Substrate is bound by residues Arg-56, Tyr-192, and Lys-198. Residues Lys-198, His-217, and Gly-233–Thr-241 each bind ATP. Residues Lys-198 and His-217 each coordinate Mn(2+). Asp-254 contributes to the Mn(2+) binding site. Glu-282, Arg-319, and Thr-444 together coordinate ATP. Arg-319 contributes to the substrate binding site.

It belongs to the phosphoenolpyruvate carboxykinase (ATP) family. It depends on Mn(2+) as a cofactor.

It is found in the cytoplasm. The enzyme catalyses oxaloacetate + ATP = phosphoenolpyruvate + ADP + CO2. It participates in carbohydrate biosynthesis; gluconeogenesis. Its function is as follows. Involved in the gluconeogenesis. Catalyzes the conversion of oxaloacetate (OAA) to phosphoenolpyruvate (PEP) through direct phosphoryl transfer between the nucleoside triphosphate and OAA. This Bacillus cereus (strain ATCC 10987 / NRS 248) protein is Phosphoenolpyruvate carboxykinase (ATP).